The chain runs to 507 residues: Probable cytosol aminopeptidase (507 aa).

2 residues coordinate Mn(2+): Lys269 and Asp274. Lys281 is a catalytic residue. Residues Asp292, Asp351, and Glu353 each contribute to the Mn(2+) site. Arg355 is an active-site residue.

It belongs to the peptidase M17 family. Mn(2+) is required as a cofactor.

Its subcellular location is the cytoplasm. The enzyme catalyses Release of an N-terminal amino acid, Xaa-|-Yaa-, in which Xaa is preferably Leu, but may be other amino acids including Pro although not Arg or Lys, and Yaa may be Pro. Amino acid amides and methyl esters are also readily hydrolyzed, but rates on arylamides are exceedingly low.. The catalysed reaction is Release of an N-terminal amino acid, preferentially leucine, but not glutamic or aspartic acids.. Its function is as follows. Presumably involved in the processing and regular turnover of intracellular proteins. Catalyzes the removal of unsubstituted N-terminal amino acids from various peptides. The sequence is that of Probable cytosol aminopeptidase from Chromohalobacter salexigens (strain ATCC BAA-138 / DSM 3043 / CIP 106854 / NCIMB 13768 / 1H11).